The chain runs to 548 residues: Chaperonin GroEL (548 aa).

ATP is bound by residues 30–33 (TLGP), Lys51, 87–91 (DGTTT), Gly415, 479–481 (NAA), and Asp495.

It belongs to the chaperonin (HSP60) family. As to quaternary structure, forms a cylinder of 14 subunits composed of two heptameric rings stacked back-to-back. Interacts with the co-chaperonin GroES.

It localises to the cytoplasm. It catalyses the reaction ATP + H2O + a folded polypeptide = ADP + phosphate + an unfolded polypeptide.. In terms of biological role, together with its co-chaperonin GroES, plays an essential role in assisting protein folding. The GroEL-GroES system forms a nano-cage that allows encapsulation of the non-native substrate proteins and provides a physical environment optimized to promote and accelerate protein folding. This Salmonella gallinarum (strain 287/91 / NCTC 13346) protein is Chaperonin GroEL.